Here is a 620-residue protein sequence, read N- to C-terminus: Methionine--tRNA ligase (620 aa).

Positions 11 to 21 match the 'HIGH' region motif; it reads PYANGPRHIGH. Zn(2+) contacts are provided by cysteine 143, cysteine 146, cysteine 156, and cysteine 159. Residues 347 to 351 carry the 'KMSKS' region motif; the sequence is KFSSS. Serine 350 is an ATP binding site.

This sequence belongs to the class-I aminoacyl-tRNA synthetase family. MetG type 1 subfamily. In terms of assembly, monomer. Zn(2+) serves as cofactor.

The protein resides in the cytoplasm. The catalysed reaction is tRNA(Met) + L-methionine + ATP = L-methionyl-tRNA(Met) + AMP + diphosphate. In terms of biological role, is required not only for elongation of protein synthesis but also for the initiation of all mRNA translation through initiator tRNA(fMet) aminoacylation. This is Methionine--tRNA ligase from Bifidobacterium adolescentis (strain ATCC 15703 / DSM 20083 / NCTC 11814 / E194a).